The following is a 186-amino-acid chain: High mobility group protein B4 (186 aa).

DNA-binding regions (HMG box) lie at residues 9-79 (PKAN…MNYV) and 93-161 (PRRP…ELYR). A disordered region spans residues 77–98 (NYVGKRKKRRKRDPQEPRRPPS).

This sequence belongs to the HMGB family.

The protein resides in the nucleus. It localises to the chromosome. This Homo sapiens (Human) protein is High mobility group protein B4 (HMGB4).